Consider the following 933-residue polypeptide: MIERVKTTKLSEASGLPKTYDPVGTENRWQKAWEEKGAFKPDPSAPGDPFSVVIPPPNVTGSLHMGHAFNTALIDTVVRYKRLKGNNVLCLPGTDHASIAVQTILERQLKEEGKNRRDLGRASFLEKAWEWKEKSGGRIVDQLKRLGYSVDWSRERFTLDEGLSKAVSEAFVRLHEKGLIYRGEYLVNWCPASGSAVSDLEVEMKEVDGHLWHFRYPLVTSSVSSAKQISYLEVATTRPETMLGDVAVAVNPSDERYKDLIGEKLTLPLVGRTIPIIGDPHVDKDFGTGCVKVTPAHDPNDFEIGQRHDLPQITVMTKKGTMNHNAGQFEGLDRFEAREAVIDSLKEIGLLTKIEAYKHSVPFSDRGKVPVEPLLSTQWFVKMDPLSSSCSEFFEKGQPKFIPNRWSKVYRDWLTDIRDWCISRQLWWGHRIPAWFVISQTDNKVVNETPYIVARTEDEAKKLAREKYGDSVKIEQDEDVLDTWFSSGLWPFSTLGWPDETHPDFQRWYPTNTLVTGFDIIFFWVARMTMMAGVFTERMPFADVYIHGLVRDEQNRKMSKSAGNGIDPLLLIERYGTDALRFALVREVAGAGQDIRLDFDRKNQTSATVEASRNFANKLWNATRFALINLEDQDYENLESYDSSKLQLSDRWILSRLARVNHETANRYENYALGEAAKGLYEFAWNDFCDWYLELIKRRLNNSENLSSDELLDRKIAKSVLYKVLSDLLIMLHPLMPHLTEELWHGLTGLDEDQFLALQPWPKSNEQDLNLDLESSFSDLFASIRLIRNLRAVAGLKPSQKVPVMLVSGKEVLQKTLTTSINDIAVLTKAKEVQILSPEQAKSLPSMKALAGVSGELEVVLPIEGLIDIASLRSRLEKDLNKAQKEIESLSGRLANKNFVDKAPKDVVEECRANLTESEAQVRLVKERLMGLD.

A disordered region spans residues 1–24 (MIERVKTTKLSEASGLPKTYDPVG). Residues 57–67 (PNVTGSLHMGH) carry the 'HIGH' region motif. A 'KMSKS' region motif is present at residues 557–561 (KMSKS). K560 is an ATP binding site. The stretch at 866-932 (LIDIASLRSR…RLVKERLMGL (67 aa)) forms a coiled coil.

This sequence belongs to the class-I aminoacyl-tRNA synthetase family. ValS type 1 subfamily. In terms of assembly, monomer.

It localises to the cytoplasm. It carries out the reaction tRNA(Val) + L-valine + ATP = L-valyl-tRNA(Val) + AMP + diphosphate. In terms of biological role, catalyzes the attachment of valine to tRNA(Val). As ValRS can inadvertently accommodate and process structurally similar amino acids such as threonine, to avoid such errors, it has a 'posttransfer' editing activity that hydrolyzes mischarged Thr-tRNA(Val) in a tRNA-dependent manner. This is Valine--tRNA ligase from Prochlorococcus marinus (strain NATL2A).